We begin with the raw amino-acid sequence, 581 residues long: Proline--tRNA ligase (581 aa).

This sequence belongs to the class-II aminoacyl-tRNA synthetase family. ProS type 1 subfamily. In terms of assembly, homodimer.

It is found in the cytoplasm. It catalyses the reaction tRNA(Pro) + L-proline + ATP = L-prolyl-tRNA(Pro) + AMP + diphosphate. Functionally, catalyzes the attachment of proline to tRNA(Pro) in a two-step reaction: proline is first activated by ATP to form Pro-AMP and then transferred to the acceptor end of tRNA(Pro). As ProRS can inadvertently accommodate and process non-cognate amino acids such as alanine and cysteine, to avoid such errors it has two additional distinct editing activities against alanine. One activity is designated as 'pretransfer' editing and involves the tRNA(Pro)-independent hydrolysis of activated Ala-AMP. The other activity is designated 'posttransfer' editing and involves deacylation of mischarged Ala-tRNA(Pro). The misacylated Cys-tRNA(Pro) is not edited by ProRS. The polypeptide is Proline--tRNA ligase (Blochmanniella pennsylvanica (strain BPEN)).